We begin with the raw amino-acid sequence, 37 residues long: Large ribosomal subunit protein bL36 (37 aa).

The protein belongs to the bacterial ribosomal protein bL36 family.

This chain is Large ribosomal subunit protein bL36, found in Synechococcus elongatus (strain ATCC 33912 / PCC 7942 / FACHB-805) (Anacystis nidulans R2).